Consider the following 403-residue polypeptide: RNA-binding motif, single-stranded-interacting protein 1 (403 aa).

The segment at 30-56 is disordered; that stretch reads PAHPMAPPSPSTTSSNNNSSSSSNSGW. The span at 40–54 shows a compositional bias: low complexity; that stretch reads STTSSNNNSSSSSNS. 2 consecutive RRM domains span residues 62–135 and 141–226; these read TNLY…MAKQ and TNLY…FADG. T208 carries the post-translational modification Phosphothreonine.

It is found in the nucleus. Functionally, single-stranded DNA binding protein that interacts with the region upstream of the C-myc gene. Binds specifically to the DNA sequence motif 5'-[AT]CT[AT][AT]T-3'. Probably has a role in DNA replication. This is RNA-binding motif, single-stranded-interacting protein 1 (RBMS1) from Bos taurus (Bovine).